We begin with the raw amino-acid sequence, 189 residues long: UPF0232 protein MLBr00004 (189 aa).

The interval 59–78 (TDRRRNWSGPGPDVRDPQPL) is disordered.

This sequence belongs to the UPF0232 family.

The polypeptide is UPF0232 protein MLBr00004 (Mycobacterium leprae (strain Br4923)).